The following is a 130-amino-acid chain: Small ribosomal subunit protein uS11 (130 aa).

The protein belongs to the universal ribosomal protein uS11 family. Part of the 30S ribosomal subunit. Interacts with proteins S7 and S18. Binds to IF-3.

Its function is as follows. Located on the platform of the 30S subunit, it bridges several disparate RNA helices of the 16S rRNA. Forms part of the Shine-Dalgarno cleft in the 70S ribosome. In Gloeobacter violaceus (strain ATCC 29082 / PCC 7421), this protein is Small ribosomal subunit protein uS11.